Here is a 211-residue protein sequence, read N- to C-terminus: ATP phosphoribosyltransferase (211 aa).

Belongs to the ATP phosphoribosyltransferase family. Short subfamily. As to quaternary structure, heteromultimer composed of HisG and HisZ subunits.

The protein resides in the cytoplasm. It catalyses the reaction 1-(5-phospho-beta-D-ribosyl)-ATP + diphosphate = 5-phospho-alpha-D-ribose 1-diphosphate + ATP. It functions in the pathway amino-acid biosynthesis; L-histidine biosynthesis; L-histidine from 5-phospho-alpha-D-ribose 1-diphosphate: step 1/9. Catalyzes the condensation of ATP and 5-phosphoribose 1-diphosphate to form N'-(5'-phosphoribosyl)-ATP (PR-ATP). Has a crucial role in the pathway because the rate of histidine biosynthesis seems to be controlled primarily by regulation of HisG enzymatic activity. The chain is ATP phosphoribosyltransferase from Pseudomonas fluorescens (strain SBW25).